We begin with the raw amino-acid sequence, 256 residues long: Kallikrein 1-related peptidase-like b4 (256 aa).

The N-terminal stretch at 1–17 (MWFLILFLALSLGGIDA) is a signal peptide. The tract at residues 18–24 (APPVQSQ) is activation peptide homolog. In terms of domain architecture, Peptidase S1 spans 18 to 253 (APPVQSQVDC…FSSWIRETMA (236 aa)). A disulfide bridge links Cys45 with Cys61. Zn(2+) is bound by residues Glu77 and His84. 3 cysteine pairs are disulfide-bonded: Cys147-Cys214, Cys179-Cys193, and Cys204-Cys229.

The protein belongs to the peptidase S1 family. Kallikrein subfamily. As to quaternary structure, 7S nerve growth factor is composed of two alpha chains, a beta dimer composed of identical chains, and two gamma chains. Zn(2+) serves as cofactor. The presence of Gln-24 prevents cleavage of the activation peptide, which remains attached at the amino end of the mature alpha chain.

The polypeptide is Kallikrein 1-related peptidase-like b4 (Klk1b4) (Mus musculus (Mouse)).